The chain runs to 152 residues: MMKKIDVKILDPRVGKEFPLPTYATSGSAGLDLRACLDDAVELAPGDTTLVPTGLAIHIADPSLAAMMLPRSGLGHKHGIVLGNLVGLIDSDYQGQLMISVWNRGQDNFTIQPGERIAQMIFVPVVQAEFNLVEDFDATDRGEGGFGHSGRQ.

Residues 71 to 73 (RSG), asparagine 84, 88 to 90 (LID), and methionine 98 contribute to the substrate site.

This sequence belongs to the dUTPase family. In terms of assembly, homotrimer. Mg(2+) serves as cofactor.

It carries out the reaction dUTP + H2O = dUMP + diphosphate + H(+). Its pathway is pyrimidine metabolism; dUMP biosynthesis; dUMP from dCTP (dUTP route): step 2/2. This enzyme is involved in nucleotide metabolism: it produces dUMP, the immediate precursor of thymidine nucleotides and it decreases the intracellular concentration of dUTP so that uracil cannot be incorporated into DNA. The chain is Deoxyuridine 5'-triphosphate nucleotidohydrolase from Escherichia coli O1:K1 / APEC.